The following is an 837-amino-acid chain: Vacuolar membrane protease (837 aa).

Residues 1–36 (MSEEEVHDTSSEASEVFTNQPNAFVRGVRSIFGYRK) lie on the Cytoplasmic side of the membrane. A helical transmembrane segment spans residues 37–57 (TSLTLFVILTIVVTAGLSFYD). The Vacuolar portion of the chain corresponds to 58–355 (NSLELTIELP…FATPISALAR (298 aa)). Residue asparagine 143 is glycosylated (N-linked (GlcNAc...) asparagine). 2 residues coordinate Zn(2+): histidine 157 and aspartate 169. Glutamate 201 acts as the Proton acceptor in catalysis. Zn(2+) is bound by residues glutamate 202, glutamate 227, and histidine 299. Residues 356 to 376 (VNLVLLVLFPVVSTPLLFVIV) form a helical membrane-spanning segment. Residues 377–384 (KYKKWKLR) are Cytoplasmic-facing. A helical membrane pass occupies residues 385–405 (VTNFLGVPLAMGLAVAVGQVG). The Vacuolar portion of the chain corresponds to 406-415 (NPMLVSSHPM). Residues 416–436 (MVVATTTSIVVLVYYVVLNGV) form a helical membrane-spanning segment. Residues 437-446 (DWVNTSSDQK) lie on the Cytoplasmic side of the membrane. Residues 447–467 (LVTMIEVSFVYWVVLVYVTWS) traverse the membrane as a helical segment. Over 468-474 (GGDHTGE) the chain is Vacuolar. Residues 475-495 (FGVTVLFFVQASTSLLGLIGW) traverse the membrane as a helical segment. Residues 496 to 539 (TFTRVRGGDEPLLSGEEERYGTEDERDTEKPLVEHNYDWSLQYL) are Cytoplasmic-facing. Residues 540–560 (LIVPVSSLVVYNSGWLVLEGV) form a helical membrane-spanning segment. The N-linked (GlcNAc...) asparagine glycan is linked to asparagine 561. Residues 561–572 (NKTVQESLASEH) lie on the Vacuolar side of the membrane. Residues 573–593 (LIYWIVVVFSQFLVLPVVPFI) form a helical membrane-spanning segment. The Cytoplasmic segment spans residues 594–598 (TKFNR). A helical membrane pass occupies residues 599–619 (YIVLGLSVVVVVGVLMSMAVH). The Vacuolar segment spans residues 620-837 (PFNQGSPMKL…LVGVVKHVDV (218 aa)). Asparagine 689 is a glycosylation site (N-linked (GlcNAc...) asparagine).

Belongs to the peptidase M28 family. The cofactor is Zn(2+).

It localises to the vacuole membrane. Functionally, may be involved in vacuolar sorting and osmoregulation. This Candida albicans (strain SC5314 / ATCC MYA-2876) (Yeast) protein is Vacuolar membrane protease.